The primary structure comprises 66 residues: Large ribosomal subunit protein bL35 (66 aa).

Basic residues-rich tracts occupy residues 1-16 and 38-49; these read MPKMKTHRGAAKRVKR and TKQKRQLRKARL. The tract at residues 1–49 is disordered; it reads MPKMKTHRGAAKRVKRTASGQLKRSRAFTSHLFANKSTKQKRQLRKARL.

Belongs to the bacterial ribosomal protein bL35 family.

This Staphylococcus aureus (strain MSSA476) protein is Large ribosomal subunit protein bL35.